A 114-amino-acid chain; its full sequence is Fluoride-specific ion channel FluC 1 (114 aa).

Helical transmembrane passes span 3–23, 30–50, 55–75, and 87–107; these read IDIK…GALF, IFIV…LNIL, LTLC…MSHL, and FLLN…LGHI. Na(+) is bound by residues glycine 63 and threonine 66.

The protein belongs to the fluoride channel Fluc/FEX (TC 1.A.43) family.

It is found in the cell inner membrane. It carries out the reaction fluoride(in) = fluoride(out). Na(+) is not transported, but it plays an essential structural role and its presence is essential for fluoride channel function. Its function is as follows. Fluoride-specific ion channel. Important for reducing fluoride concentration in the cell, thus reducing its toxicity. This is Fluoride-specific ion channel FluC 1 from Prochlorococcus marinus (strain NATL2A).